The chain runs to 595 residues: Aspartate--tRNA(Asp/Asn) ligase (595 aa).

L-aspartate is bound at residue E178. The aspartate stretch occupies residues 202 to 205 (QIFK). Residue R224 coordinates L-aspartate. ATP-binding positions include 224 to 226 (RDE) and Q233. H458 contributes to the L-aspartate binding site. E488 lines the ATP pocket. Residue R495 coordinates L-aspartate. 540-543 (GIDR) is a binding site for ATP.

This sequence belongs to the class-II aminoacyl-tRNA synthetase family. Type 1 subfamily. Homodimer.

Its subcellular location is the cytoplasm. The catalysed reaction is tRNA(Asx) + L-aspartate + ATP = L-aspartyl-tRNA(Asx) + AMP + diphosphate. In terms of biological role, aspartyl-tRNA synthetase with relaxed tRNA specificity since it is able to aspartylate not only its cognate tRNA(Asp) but also tRNA(Asn). Reaction proceeds in two steps: L-aspartate is first activated by ATP to form Asp-AMP and then transferred to the acceptor end of tRNA(Asp/Asn). This chain is Aspartate--tRNA(Asp/Asn) ligase, found in Acaryochloris marina (strain MBIC 11017).